Reading from the N-terminus, the 280-residue chain is 3-methyl-2-oxobutanoate hydroxymethyltransferase (280 aa).

Residues D61 and D100 each coordinate Mg(2+). 3-methyl-2-oxobutanoate-binding positions include 61–62 (DS), D100, and K130. Residue E132 participates in Mg(2+) binding. The active-site Proton acceptor is the E198.

It belongs to the PanB family. As to quaternary structure, homodecamer; pentamer of dimers. The cofactor is Mg(2+).

The protein resides in the cytoplasm. It catalyses the reaction 3-methyl-2-oxobutanoate + (6R)-5,10-methylene-5,6,7,8-tetrahydrofolate + H2O = 2-dehydropantoate + (6S)-5,6,7,8-tetrahydrofolate. Its pathway is cofactor biosynthesis; (R)-pantothenate biosynthesis; (R)-pantoate from 3-methyl-2-oxobutanoate: step 1/2. Catalyzes the reversible reaction in which hydroxymethyl group from 5,10-methylenetetrahydrofolate is transferred onto alpha-ketoisovalerate to form ketopantoate. This is 3-methyl-2-oxobutanoate hydroxymethyltransferase from Mycolicibacterium vanbaalenii (strain DSM 7251 / JCM 13017 / BCRC 16820 / KCTC 9966 / NRRL B-24157 / PYR-1) (Mycobacterium vanbaalenii).